The chain runs to 341 residues: Mitochondrial transcription factor 1 (341 aa).

S-adenosyl-L-methionine is bound by residues Leu-23, Glu-77, Asp-101, and Asn-137.

Belongs to the class I-like SAM-binding methyltransferase superfamily. rRNA adenine N(6)-methyltransferase family.

It is found in the mitochondrion intermembrane space. Mitochondrial transcription factor that confers selective promoter recognition on the core subunit of the yeast mitochondrial RNA polymerase. Interacts with DNA in a non-specific manner. The chain is Mitochondrial transcription factor 1 (MTF1) from Saccharomyces cerevisiae (strain ATCC 204508 / S288c) (Baker's yeast).